Reading from the N-terminus, the 388-residue chain is Dual-specificity RNA methyltransferase RlmN (388 aa).

The active-site Proton acceptor is the E109. Residues 115–354 enclose the Radical SAM core domain; that stretch reads EEDRATLCVS…TIVRKTRGDD (240 aa). A disulfide bridge connects residues C122 and C359. The [4Fe-4S] cluster site is built by C129, C133, and C136. Residues 183 to 184, S215, 237 to 239, and N316 contribute to the S-adenosyl-L-methionine site; these read GE and SLH. C359 acts as the S-methylcysteine intermediate in catalysis.

The protein belongs to the radical SAM superfamily. RlmN family. The cofactor is [4Fe-4S] cluster.

The protein localises to the cytoplasm. The enzyme catalyses adenosine(2503) in 23S rRNA + 2 reduced [2Fe-2S]-[ferredoxin] + 2 S-adenosyl-L-methionine = 2-methyladenosine(2503) in 23S rRNA + 5'-deoxyadenosine + L-methionine + 2 oxidized [2Fe-2S]-[ferredoxin] + S-adenosyl-L-homocysteine. The catalysed reaction is adenosine(37) in tRNA + 2 reduced [2Fe-2S]-[ferredoxin] + 2 S-adenosyl-L-methionine = 2-methyladenosine(37) in tRNA + 5'-deoxyadenosine + L-methionine + 2 oxidized [2Fe-2S]-[ferredoxin] + S-adenosyl-L-homocysteine. Its function is as follows. Specifically methylates position 2 of adenine 2503 in 23S rRNA and position 2 of adenine 37 in tRNAs. m2A2503 modification seems to play a crucial role in the proofreading step occurring at the peptidyl transferase center and thus would serve to optimize ribosomal fidelity. The polypeptide is Dual-specificity RNA methyltransferase RlmN (Klebsiella pneumoniae subsp. pneumoniae (strain ATCC 700721 / MGH 78578)).